We begin with the raw amino-acid sequence, 166 residues long: UPF0561 protein C2orf68 homolog (166 aa).

Positions 32–49 (NQLDRDDYDKKVKQAAKE) are enriched in basic and acidic residues. The segment at 32 to 107 (NQLDRDDYDK…SELEPPGRQL (76 aa)) is disordered. A compositionally biased stretch (low complexity) spans 91-101 (ESSSSGSSELE).

Belongs to the UPF0561 family.

This Mus musculus (Mouse) protein is UPF0561 protein C2orf68 homolog.